Reading from the N-terminus, the 399-residue chain is 1-deoxy-D-xylulose 5-phosphate reductoisomerase (399 aa).

NADPH is bound by residues Thr13, Gly14, Ser15, Ile16, and Asn127. Residue Lys128 participates in 1-deoxy-D-xylulose 5-phosphate binding. Glu129 contacts NADPH. Mn(2+) is bound at residue Asp153. Ser154, Glu155, Ser187, and His210 together coordinate 1-deoxy-D-xylulose 5-phosphate. Glu155 serves as a coordination point for Mn(2+). Gly216 contributes to the NADPH binding site. 1-deoxy-D-xylulose 5-phosphate-binding residues include Ser223, Asn228, Lys229, and Glu232. Glu232 contributes to the Mn(2+) binding site.

Belongs to the DXR family. Requires Mg(2+) as cofactor. It depends on Mn(2+) as a cofactor.

The catalysed reaction is 2-C-methyl-D-erythritol 4-phosphate + NADP(+) = 1-deoxy-D-xylulose 5-phosphate + NADPH + H(+). The protein operates within isoprenoid biosynthesis; isopentenyl diphosphate biosynthesis via DXP pathway; isopentenyl diphosphate from 1-deoxy-D-xylulose 5-phosphate: step 1/6. In terms of biological role, catalyzes the NADPH-dependent rearrangement and reduction of 1-deoxy-D-xylulose-5-phosphate (DXP) to 2-C-methyl-D-erythritol 4-phosphate (MEP). In Bordetella avium (strain 197N), this protein is 1-deoxy-D-xylulose 5-phosphate reductoisomerase.